An 80-amino-acid polypeptide reads, in one-letter code: Progonadoliberin-1 (80 aa).

A signal peptide spans 1-21 (MGIKRALWWMVVCVVVLQVSA). Gln22 carries the pyrrolidone carboxylic acid modification. The residue at position 31 (Gly31) is a Glycine amide.

Belongs to the GnRH family.

Its subcellular location is the secreted. Its function is as follows. Stimulates the secretion of gonadotropins. This chain is Progonadoliberin-1 (gnrh1), found in Clarias gariepinus (North African catfish).